The sequence spans 194 residues: dITP/XTP pyrophosphatase (194 aa).

Substrate is bound at residue 8-13; the sequence is TSNPGK. The Mg(2+) site is built by Glu-38 and Asp-67. The active-site Proton acceptor is Asp-67. Substrate is bound by residues Ser-68, 152-155, Lys-175, and 180-181; these read FGYD and HR.

The protein belongs to the HAM1 NTPase family. Homodimer. It depends on Mg(2+) as a cofactor.

It carries out the reaction XTP + H2O = XMP + diphosphate + H(+). It catalyses the reaction dITP + H2O = dIMP + diphosphate + H(+). The catalysed reaction is ITP + H2O = IMP + diphosphate + H(+). Functionally, pyrophosphatase that catalyzes the hydrolysis of nucleoside triphosphates to their monophosphate derivatives, with a high preference for the non-canonical purine nucleotides XTP (xanthosine triphosphate), dITP (deoxyinosine triphosphate) and ITP. Seems to function as a house-cleaning enzyme that removes non-canonical purine nucleotides from the nucleotide pool, thus preventing their incorporation into DNA/RNA and avoiding chromosomal lesions. This Legionella pneumophila (strain Paris) protein is dITP/XTP pyrophosphatase.